A 248-amino-acid polypeptide reads, in one-letter code: Ubiquinone/menaquinone biosynthesis C-methyltransferase UbiE (248 aa).

The S-adenosyl-L-methionine site is built by S68 and D92.

Belongs to the class I-like SAM-binding methyltransferase superfamily. MenG/UbiE family.

It carries out the reaction a 2-demethylmenaquinol + S-adenosyl-L-methionine = a menaquinol + S-adenosyl-L-homocysteine + H(+). The catalysed reaction is a 2-methoxy-6-(all-trans-polyprenyl)benzene-1,4-diol + S-adenosyl-L-methionine = a 5-methoxy-2-methyl-3-(all-trans-polyprenyl)benzene-1,4-diol + S-adenosyl-L-homocysteine + H(+). It participates in quinol/quinone metabolism; menaquinone biosynthesis; menaquinol from 1,4-dihydroxy-2-naphthoate: step 2/2. Its pathway is cofactor biosynthesis; ubiquinone biosynthesis. In terms of biological role, methyltransferase required for the conversion of demethylmenaquinol (DMKH2) to menaquinol (MKH2) and the conversion of 2-polyprenyl-6-methoxy-1,4-benzoquinol (DDMQH2) to 2-polyprenyl-3-methyl-6-methoxy-1,4-benzoquinol (DMQH2). In Rickettsia bellii (strain OSU 85-389), this protein is Ubiquinone/menaquinone biosynthesis C-methyltransferase UbiE.